The following is a 123-amino-acid chain: Small ribosomal subunit protein uS12 (123 aa).

Asp-89 carries the post-translational modification 3-methylthioaspartic acid. Residues Gly-100–Lys-123 form a disordered region. Residues Asn-111–Lys-123 show a composition bias toward basic residues.

The protein belongs to the universal ribosomal protein uS12 family. In terms of assembly, part of the 30S ribosomal subunit. Contacts proteins S8 and S17. May interact with IF1 in the 30S initiation complex.

Functionally, with S4 and S5 plays an important role in translational accuracy. Its function is as follows. Interacts with and stabilizes bases of the 16S rRNA that are involved in tRNA selection in the A site and with the mRNA backbone. Located at the interface of the 30S and 50S subunits, it traverses the body of the 30S subunit contacting proteins on the other side and probably holding the rRNA structure together. The combined cluster of proteins S8, S12 and S17 appears to hold together the shoulder and platform of the 30S subunit. This is Small ribosomal subunit protein uS12 from Pseudomonas syringae pv. syringae (strain B728a).